The chain runs to 236 residues: UPF0257 lipoprotein YnfC (236 aa).

A signal peptide spans 1–16; the sequence is MKKPLLLTLLCMILAG. Residue Cys-17 is the site of N-palmitoyl cysteine attachment. Cys-17 carries S-diacylglycerol cysteine lipidation.

The protein belongs to the UPF0257 family.

The protein resides in the cell membrane. The protein is UPF0257 lipoprotein YnfC of Salmonella schwarzengrund (strain CVM19633).